We begin with the raw amino-acid sequence, 105 residues long: Circadian clock oscillator protein KaiB1 (105 aa).

This sequence belongs to the KaiB family. In terms of assembly, homotetramer in solution and crystals formed by 2 dimers. Only elutes as a homotetramer in size exclusion chromatography, interacts with KaiC1 and KaiC3. The KaiABC complex composition changes during the circadian cycle to control KaiC phosphorylation. Complexes KaiC(6), KaiA(2-4):KaiC(6), KaiB(6):KaiC(6) and KaiC(6):KaiB(6):KaiA(12) are among the most important forms, many form cooperatively. Undergoes a major conformational rearrangment; in the free state forms homotetramers as a dimer of dimers. When bound to the CI domain of KaiC switches to a monomeric thioredoxin-fold (KaiB(fs)). KaiB(fs) binds CikA, leading it to dephosphorylate phospho-RpaA.

Functionally, key component of the KaiABC oscillator complex, which constitutes the main circadian regulator in cyanobacteria. Complex composition changes during the circadian cycle to control KaiC phosphorylation. KaiA stimulates KaiC autophosphorylation, while KaiB sequesters KaiA, leading to KaiC autodephosphorylation. Phospho-Ser-431 KaiC accumulation triggers binding of KaiB to form the KaiB(6):KaiC(6) complex, leading to changes in output regulators CikA and SasA. KaiB switches to a thioredoxin-like fold (KaiB(fs)) when bound to KaiC. KaiB(6):KaiC(6) formation exposes a site for KaiA binding that sequesters KaiA from KaiC, making the KaiC(6):KaiB(6):KaiA(12) complex that results in KaiC autodephosphorylation. In terms of biological role, component of the oscillator and circadian clock in this organism, enhances fitness in a rhythmic environment. The homotetramer reduces the ATPase activity of KaiC3 by 35%. A metamorphic protein which reversibly switches between an inactive tetrameric fold and a rare, thioredoxin-like monomeric fold (KaiB(fs)). KaiB(fs) binds phospho-KaiC, KaiA and CikA. KaiA and CikA compete for binding to KaiB(fs), and KaiB(fs) and SasA compete for binding to KaiC, thus the clock oscillator and output signal pathway are tightly coupled. The chain is Circadian clock oscillator protein KaiB1 from Synechocystis sp. (strain ATCC 27184 / PCC 6803 / Kazusa).